Consider the following 330-residue polypeptide: Phenylalanine--tRNA ligase alpha subunit (330 aa).

Glu257 provides a ligand contact to Mg(2+).

It belongs to the class-II aminoacyl-tRNA synthetase family. Phe-tRNA synthetase alpha subunit type 1 subfamily. As to quaternary structure, tetramer of two alpha and two beta subunits. The cofactor is Mg(2+).

The protein resides in the cytoplasm. The enzyme catalyses tRNA(Phe) + L-phenylalanine + ATP = L-phenylalanyl-tRNA(Phe) + AMP + diphosphate + H(+). This is Phenylalanine--tRNA ligase alpha subunit from Acaryochloris marina (strain MBIC 11017).